Here is a 154-residue protein sequence, read N- to C-terminus: Ribonuclease H (154 aa).

The 142-residue stretch at 1-142 (MRKQIEIFTD…CDELAKQGAE (142 aa)) folds into the RNase H type-1 domain. Positions 10, 48, 70, and 134 each coordinate Mg(2+).

Belongs to the RNase H family. Monomer. It depends on Mg(2+) as a cofactor.

The protein localises to the cytoplasm. It catalyses the reaction Endonucleolytic cleavage to 5'-phosphomonoester.. In terms of biological role, endonuclease that specifically degrades the RNA of RNA-DNA hybrids. The polypeptide is Ribonuclease H (Actinobacillus succinogenes (strain ATCC 55618 / DSM 22257 / CCUG 43843 / 130Z)).